Consider the following 1238-residue polypeptide: Inner capsid protein VP2 (1238 aa).

Residues 1-35 (MSTSAKKTPESKTEDKIEPVIEQTSNDKPEPPPNK) form a disordered region. Positions 7–30 (KTPESKTEDKIEPVIEQTSNDKPE) are enriched in basic and acidic residues.

This sequence belongs to the turreted BTV-fold inner capsid family. In terms of assembly, homodecamer; each decamer is made up of two conformers of VP2, called VP2A and VP2B. 12 homodecamers assemble to form an icosahedral capsid.

The protein resides in the virion. Functionally, inner capsid protein that self-assembles to form an icosahedral capsid with a T=2 symmetry, which consists of 120 copies of VP2, with channels at each of its five-fold vertices. This capsid constitutes the innermost concentric layer of the viral mature particle. The polypeptide is Inner capsid protein VP2 (S2) (Cryphonectria parasitica (Chestnut blight fungus)).